The chain runs to 90 residues: UPF0335 protein RPB_1426 (90 aa).

The protein belongs to the UPF0335 family.

The sequence is that of UPF0335 protein RPB_1426 from Rhodopseudomonas palustris (strain HaA2).